Consider the following 450-residue polypeptide: Glucose-6-phosphate isomerase (450 aa).

Residue T38 is modified to Phosphothreonine. The active-site Proton donor is the E290. Residues H311 and K425 contribute to the active site.

It belongs to the GPI family.

The protein localises to the cytoplasm. The catalysed reaction is alpha-D-glucose 6-phosphate = beta-D-fructose 6-phosphate. It functions in the pathway carbohydrate biosynthesis; gluconeogenesis. The protein operates within carbohydrate degradation; glycolysis; D-glyceraldehyde 3-phosphate and glycerone phosphate from D-glucose: step 2/4. Its function is as follows. Catalyzes the reversible isomerization of glucose-6-phosphate to fructose-6-phosphate. This Bacillus subtilis (strain 168) protein is Glucose-6-phosphate isomerase.